The sequence spans 214 residues: Probable nicotinate-nucleotide adenylyltransferase (214 aa).

The protein belongs to the NadD family.

It catalyses the reaction nicotinate beta-D-ribonucleotide + ATP + H(+) = deamido-NAD(+) + diphosphate. It functions in the pathway cofactor biosynthesis; NAD(+) biosynthesis; deamido-NAD(+) from nicotinate D-ribonucleotide: step 1/1. Its function is as follows. Catalyzes the reversible adenylation of nicotinate mononucleotide (NaMN) to nicotinic acid adenine dinucleotide (NaAD). This chain is Probable nicotinate-nucleotide adenylyltransferase, found in Rhodopirellula baltica (strain DSM 10527 / NCIMB 13988 / SH1).